The following is a 424-amino-acid chain: 3-phosphoshikimate 1-carboxyvinyltransferase (424 aa).

3-phosphoshikimate contacts are provided by Lys21, Ser22, and Arg26. Lys21 contributes to the phosphoenolpyruvate binding site. 2 residues coordinate phosphoenolpyruvate: Gly92 and Arg120. Positions 163, 164, 165, 191, 306, and 333 each coordinate 3-phosphoshikimate. Gln165 provides a ligand contact to phosphoenolpyruvate. Catalysis depends on Asp306, which acts as the Proton acceptor. Positions 337, 379, and 405 each coordinate phosphoenolpyruvate.

This sequence belongs to the EPSP synthase family. As to quaternary structure, monomer.

It localises to the cytoplasm. It carries out the reaction 3-phosphoshikimate + phosphoenolpyruvate = 5-O-(1-carboxyvinyl)-3-phosphoshikimate + phosphate. It participates in metabolic intermediate biosynthesis; chorismate biosynthesis; chorismate from D-erythrose 4-phosphate and phosphoenolpyruvate: step 6/7. In terms of biological role, catalyzes the transfer of the enolpyruvyl moiety of phosphoenolpyruvate (PEP) to the 5-hydroxyl of shikimate-3-phosphate (S3P) to produce enolpyruvyl shikimate-3-phosphate and inorganic phosphate. The chain is 3-phosphoshikimate 1-carboxyvinyltransferase from Clostridium perfringens (strain SM101 / Type A).